The chain runs to 304 residues: Small ribosomal subunit biogenesis GTPase RsgA (304 aa).

Residues 70–229 (HNELNRPNIA…IADTPGFSKL (160 aa)) form the CP-type G domain. GTP contacts are provided by residues 119-122 (TKID) and 172-180 (GQTGVGKST). Zn(2+)-binding residues include C253, C259, H261, and C267.

It belongs to the TRAFAC class YlqF/YawG GTPase family. RsgA subfamily. As to quaternary structure, monomer. Associates with 30S ribosomal subunit, binds 16S rRNA. Zn(2+) is required as a cofactor.

Its subcellular location is the cytoplasm. Its function is as follows. One of several proteins that assist in the late maturation steps of the functional core of the 30S ribosomal subunit. Helps release RbfA from mature subunits. May play a role in the assembly of ribosomal proteins into the subunit. Circularly permuted GTPase that catalyzes slow GTP hydrolysis, GTPase activity is stimulated by the 30S ribosomal subunit. The protein is Small ribosomal subunit biogenesis GTPase RsgA of Phytoplasma mali (strain AT).